Here is a 547-residue protein sequence, read N- to C-terminus: Membrane transporter D1 (547 aa).

At 1 to 2 (MR) the chain is on the cytoplasmic side. Residues 3 to 25 (ASVMLCAALGGFLFGYDTGVINA) traverse the membrane as a helical segment. Residues 26–43 (ALFQMKDHFGFSEHSWQY) lie on the Extracellular side of the membrane. Residues 44 to 64 (ALIVAIAIAGAFVGAFISGFI) traverse the membrane as a helical segment. Over 65–78 (SAAFGRRPCIAVAD) the chain is Cytoplasmic. Residues 79 to 99 (ALFVIGSVLMGAAPNVEVVLV) form a helical membrane-spanning segment. The Extracellular portion of the chain corresponds to 100–101 (SR). Residues 102–122 (VIVGLAIGISSATIPVYLAEV) form a helical membrane-spanning segment. At 123 to 136 (TSPKHRGATIVLNN) the chain is on the cytoplasmic side. Residues 137–157 (LFLTGGQFVAAGFTAIMVVFT) form a helical membrane-spanning segment. Residues 158 to 164 (SKNIGWR) lie on the Extracellular side of the membrane. Residues 165 to 185 (VAIGIGALPAVVQAFCLLFFL) traverse the membrane as a helical segment. Residues 186 to 245 (PESPRWLLSKGHADRAKAVADKFEVDLCEFQEGDELPSVRIDYRPLMARDMRFRVVLSSG) lie on the Cytoplasmic side of the membrane. Residues 246 to 266 (LQIIQQFSGINTIMYYSSVIL) traverse the membrane as a helical segment. At 267-276 (YDAGFRDAIM) the chain is on the extracellular side. Residues 277–297 (PVVLSIPLAFMNALFTAVAIF) form a helical membrane-spanning segment. Topologically, residues 298-308 (TVDRFGRRRML) are cytoplasmic. Residues 309 to 329 (LISVFGCLVLLVVIAIIGFFI) form a helical membrane-spanning segment. Residues 330–339 (GTRISYSVGG) are Extracellular-facing. A helical membrane pass occupies residues 340–360 (GLFLALLAVFLALYAPGIGCI). The Cytoplasmic segment spans residues 361 to 385 (PWVIMGEIFPTHLRTSAASVATMAN). Residues 386 to 406 (WGANVLVSQVFPILMGAIGVG) traverse the membrane as a helical segment. Gly-407 is a topological domain (extracellular). The chain crosses the membrane as a helical span at residues 408–428 (TFTIISGLMALGCIFVYFFAV). Residues 429 to 547 (ETKGLTLEQI…AIKAAPHEPK (119 aa)) are Cytoplasmic-facing. Disordered stretches follow at residues 449–468 (PPRF…YRED) and 510–547 (VSNK…HEPK). Over residues 519–529 (TSSSSDPQSLE) the composition is skewed to polar residues.

The protein belongs to the major facilitator superfamily. Sugar transporter (TC 2.A.1.1) family.

The protein resides in the membrane. This is Membrane transporter D1 from Leishmania donovani.